The chain runs to 518 residues: FAD-dependent monooxygenase tpcD (518 aa).

The signal sequence occupies residues methionine 1–alanine 22. Residue asparagine 61 is glycosylated (N-linked (GlcNAc...) asparagine). Positions glutamine 75–glutamine 246 constitute an FAD-binding PCMH-type domain. Histidine 112 carries the pros-8alpha-FAD histidine modification. N-linked (GlcNAc...) asparagine glycans are attached at residues asparagine 163, asparagine 208, asparagine 216, and asparagine 346.

The protein belongs to the oxygen-dependent FAD-linked oxidoreductase family. FAD is required as a cofactor.

The protein operates within secondary metabolite biosynthesis; terpenoid biosynthesis. In terms of biological role, FAD-dependent monooxygenase; part of the gene cluster that mediates the biosynthesis of terpestacin. The bifunctional terpene synthase tpcA converts isopentenyl diphosphate (IPP) and dimethylallyl diphosphate (DMAPP) into the sesterterpene preterpestacin I. The C-terminal prenyltransferase (PT) domain of tpcA catalyzes formation of GFPP, whereas the N-terminal terpene cyclase (TC) domain catalyzes the cyclization of GFPP into preterpestacin I. The cytochrome P450 monooxygenase tpcB then hydroxylates preterpestacin I to yield 24-hydroxypreterpstacin I (renamed as preterpestacin II) whereas the cytochrome P450 monooxygenase tpcC further hydroxylates preterpestacin II to yield 16,17-dihydroxypreterpestacin II (renamed as preterpestacin III). Finally, the FAD-dependent monooxygenase tpcD converts preterpestacin III into terpestacin. The sequence is that of FAD-dependent monooxygenase tpcD from Cochliobolus heterostrophus (strain C5 / ATCC 48332 / race O) (Southern corn leaf blight fungus).